A 222-amino-acid chain; its full sequence is Protein GrpE (222 aa).

Positions 1-21 (MSDEKNKFTDASFENCDLKNP) are disordered.

Belongs to the GrpE family. As to quaternary structure, homodimer.

It is found in the cytoplasm. Functionally, participates actively in the response to hyperosmotic and heat shock by preventing the aggregation of stress-denatured proteins, in association with DnaK and GrpE. It is the nucleotide exchange factor for DnaK and may function as a thermosensor. Unfolded proteins bind initially to DnaJ; upon interaction with the DnaJ-bound protein, DnaK hydrolyzes its bound ATP, resulting in the formation of a stable complex. GrpE releases ADP from DnaK; ATP binding to DnaK triggers the release of the substrate protein, thus completing the reaction cycle. Several rounds of ATP-dependent interactions between DnaJ, DnaK and GrpE are required for fully efficient folding. The protein is Protein GrpE of Bartonella tribocorum (strain CIP 105476 / IBS 506).